The following is a 191-amino-acid chain: Cyclin-dependent kinase inhibitor 1 (191 aa).

A disordered region spans residues 62-81; it reads LIHLEEEDKDGDTETSTYRR. A required for inhibitory function and interaction with CDK kinase complexes region spans residues 162–191; sequence QLKEKFKKKYNFDFEKEKPLEGRYEWVKLE.

It belongs to the CDI family. ICK/KRP subfamily. Specifically interacts with CDKA-1, but not with CDKB1-1. Interacts with CYCD2-1 and CYCD3-1. Post-translationally, ubiquitinated independently by RKP and SCF (SKP1-CUL1-FBL5/SKP2B) protein ligase complex, leading to proteasomal degradation. As to expression, expressed at low levels in roots, stems, leaves and flowers.

The protein localises to the nucleus. Its subcellular location is the nucleoplasm. Binds and inhibits CYCD2-1/CDKA-1 kinase complex activity. Regulates cell division which is crucial for plant growth, development and morphogenesis. Functions in turning cells from a mitotic to an endoreplicating cell cycle mode. Acts cell- and non-cell-autonomously to regulate endoreduplication by allowing S phase progression, but blocking entry into mitosis. Keeps on the one hand the plant cell cycle locally controlled, and on the other hand provides a possibility of linking cell cycle control in single cells with the supracellular organization of a tissue or an organ. May target specifically CDKA-1. The protein is Cyclin-dependent kinase inhibitor 1 (KRP1) of Arabidopsis thaliana (Mouse-ear cress).